The sequence spans 31 residues: Hemocyanin subunit 1 (31 aa).

The protein belongs to the tyrosinase family. Hemocyanin subfamily. In terms of tissue distribution, hemolymph.

Its subcellular location is the secreted. The protein resides in the extracellular space. Functionally, hemocyanins are copper-containing oxygen carriers occurring freely dissolved in the hemolymph of many mollusks and arthropods. This Homarus americanus (American lobster) protein is Hemocyanin subunit 1.